The primary structure comprises 205 residues: Ribosomal RNA small subunit methyltransferase G 1 (205 aa).

Residues glycine 77, leucine 82, 100 to 102 (EKS), 129 to 130 (LE), and arginine 138 each bind S-adenosyl-L-methionine.

The protein belongs to the methyltransferase superfamily. RNA methyltransferase RsmG family.

The protein localises to the cytoplasm. It catalyses the reaction guanosine(527) in 16S rRNA + S-adenosyl-L-methionine = N(7)-methylguanosine(527) in 16S rRNA + S-adenosyl-L-homocysteine. Specifically methylates the N7 position of guanine in position 527 of 16S rRNA. This Bdellovibrio bacteriovorus (strain ATCC 15356 / DSM 50701 / NCIMB 9529 / HD100) protein is Ribosomal RNA small subunit methyltransferase G 1.